A 512-amino-acid chain; its full sequence is Extracellular serine/threonine protein kinase CeFam20 (512 aa).

Topologically, residues 1 to 6 are cytoplasmic; it reads MRCNIK. The chain crosses the membrane as a helical; Signal-anchor for type II membrane protein span at residues 7–26; it reads RLFTLAIGVFAATLVIISFS. The Lumenal portion of the chain corresponds to 27–512; sequence KDNYEREWKQ…QDKKDDKKTV (486 aa). A disulfide bond links Cys110 and Cys144. A glycan (N-linked (GlcNAc...) asparagine) is linked at Asn113. ATP is bound by residues Gln176, Lys192, and Glu213. Glu213 is a binding site for Mn(2+). N-linked (GlcNAc...) asparagine glycosylation is present at Asn242. 2 cysteine pairs are disulfide-bonded: Cys268/Cys284 and Cys273/Cys277. 295-298 contributes to the ATP binding site; it reads QVFL. Cystine bridges form between Cys333/Cys409 and Cys410/Cys469. Asp366 is an active-site residue. 2 residues coordinate ATP: Glu371 and Asp387. Residue Asp387 participates in Mn(2+) binding. The segment at 486 to 512 is disordered; that stretch reads PDVSDAEQNDEEQSEEHQDKKDDKKTV. The segment covering 489–499 has biased composition (acidic residues); sequence SDAEQNDEEQS. The segment covering 500–512 has biased composition (basic and acidic residues); it reads EEHQDKKDDKKTV.

Belongs to the FAM20 family. The cofactor is Mn(2+).

It localises to the golgi apparatus membrane. The protein resides in the secreted. The catalysed reaction is L-seryl-[protein] + ATP = O-phospho-L-seryl-[protein] + ADP + H(+). The enzyme catalyses L-threonyl-[protein] + ATP = O-phospho-L-threonyl-[protein] + ADP + H(+). Golgi serine/threonine protein kinase that phosphorylates secretory pathway proteins within Ser-x-Glu/pSer motifs. The chain is Extracellular serine/threonine protein kinase CeFam20 from Caenorhabditis elegans.